We begin with the raw amino-acid sequence, 624 residues long: Matrilin-4 (624 aa).

A signal peptide spans 1–21; sequence MRGPCCWPLSLLLLFLQSWET. The VWFA 1 domain occupies 36–215; that stretch reads DLVFMIDSSR…EFGLQFQGRL (180 aa). Asn71 carries an N-linked (GlcNAc...) asparagine glycan. EGF-like domains lie at 217 to 257, 258 to 298, 299 to 339, and 340 to 380; these read GKDL…KNCL, ALDL…RSCR, AIDY…RSCR, and VRDF…KSCD. 12 disulfide bridges follow: Cys221–Cys232, Cys228–Cys241, Cys243–Cys256, Cys262–Cys273, Cys269–Cys282, Cys284–Cys297, Cys303–Cys314, Cys310–Cys323, Cys325–Cys338, Cys344–Cys355, Cys351–Cys364, and Cys366–Cys379. N-linked (GlcNAc...) asparagine glycosylation occurs at Asn307. The 176-residue stretch at 388–563 folds into the VWFA 2 domain; the sequence is DLVLLVDGSK…STMTHLLENL (176 aa). Positions 590–623 form a coiled coil; it reads EFQGRTLGALESLTQNLARLTERLEELENQLASR.

Interacts with COMP. Lung, brain, sternum, kidney and heart.

The protein localises to the secreted. Major component of the extracellular matrix of cartilage. In Mus musculus (Mouse), this protein is Matrilin-4 (Matn4).